The sequence spans 312 residues: Aspartate carbamoyltransferase catalytic subunit (312 aa).

Residues Arg55 and Thr56 each contribute to the carbamoyl phosphate site. An L-aspartate-binding site is contributed by Lys83. Carbamoyl phosphate is bound by residues Arg105, His138, and Gln141. Arg171 and Arg225 together coordinate L-aspartate. Positions 266 and 267 each coordinate carbamoyl phosphate.

The protein belongs to the aspartate/ornithine carbamoyltransferase superfamily. ATCase family. Heterododecamer (2C3:3R2) of six catalytic PyrB chains organized as two trimers (C3), and six regulatory PyrI chains organized as three dimers (R2).

It catalyses the reaction carbamoyl phosphate + L-aspartate = N-carbamoyl-L-aspartate + phosphate + H(+). The protein operates within pyrimidine metabolism; UMP biosynthesis via de novo pathway; (S)-dihydroorotate from bicarbonate: step 2/3. In terms of biological role, catalyzes the condensation of carbamoyl phosphate and aspartate to form carbamoyl aspartate and inorganic phosphate, the committed step in the de novo pyrimidine nucleotide biosynthesis pathway. The protein is Aspartate carbamoyltransferase catalytic subunit of Corynebacterium glutamicum (strain R).